A 525-amino-acid chain; its full sequence is Arylsulfatase G (525 aa).

An N-terminal signal peptide occupies residues 1–16; the sequence is MGWLFLKVLLAGVSFS. 3 residues coordinate Ca(2+): D44, D45, and C84. Residue C84 is the Nucleophile of the active site. At C84 the chain carries 3-oxoalanine (Cys). N-linked (GlcNAc...) asparagine glycosylation is present at N117. K137 serves as a coordination point for substrate. Residue H139 is part of the active site. Residue S162 participates in substrate binding. N-linked (GlcNAc...) asparagine glycosylation occurs at N215. Substrate is bound at residue H251. Residues D302 and N303 each contribute to the Ca(2+) site. N-linked (GlcNAc...) asparagine glycosylation is found at N356 and N497.

This sequence belongs to the sulfatase family. Ca(2+) serves as cofactor. In terms of processing, N-glycosylated. N-glycosylated with both high mannose and complex type sugars. Post-translationally, the conversion to 3-oxoalanine (also known as C-formylglycine, FGly), of a serine or cysteine residue in prokaryotes and of a cysteine residue in eukaryotes, is critical for catalytic activity. The 63-kDa precursor undergoes proteolytic processing in two steps, yielding two fragments in the first step (apparent molecular masses of 44 and 18 kDa). In the second step, the 44-kDa fragment is processed further to the 34- and 10-kDa chains. The 10-kDa chain is a cleavage product of the 44-kDa fragment but linked to the 18-kDa chain through a disulfide bridge. Widely expressed, with very low expression in brain, lung, heart and skeletal muscle.

The protein localises to the lysosome. It carries out the reaction an aryl sulfate + H2O = a phenol + sulfate + H(+). The catalysed reaction is Hydrolysis of the 3-sulfate groups of the N-sulfo-D-glucosamine 3-O-sulfate units of heparin.. Its activity is regulated as follows. Inhibited by phosphate. The phosphate forms a covalent bond with the active site 3-oxoalanine. Displays arylsulfatase activity at acidic pH towards artificial substrates, such as p-nitrocatechol sulfate and also, but with a lower activity towards p-nitrophenyl sulfate and 4-methylumbelliferyl sulfate. Catalyzes the hydrolysis of the 3-sulfate groups of the N-sulfo-D-glucosamine 3-O-sulfate units of heparin. This chain is Arylsulfatase G (ARSG), found in Homo sapiens (Human).